Here is a 250-residue protein sequence, read N- to C-terminus: NAD(P)H-quinone oxidoreductase subunit K (250 aa).

[4Fe-4S] cluster-binding residues include C63, C64, C128, and C159.

It belongs to the complex I 20 kDa subunit family. NDH-1 can be composed of about 15 different subunits; different subcomplexes with different compositions have been identified which probably have different functions. The cofactor is [4Fe-4S] cluster.

It localises to the cellular thylakoid membrane. The enzyme catalyses a plastoquinone + NADH + (n+1) H(+)(in) = a plastoquinol + NAD(+) + n H(+)(out). It carries out the reaction a plastoquinone + NADPH + (n+1) H(+)(in) = a plastoquinol + NADP(+) + n H(+)(out). In terms of biological role, NDH-1 shuttles electrons from an unknown electron donor, via FMN and iron-sulfur (Fe-S) centers, to quinones in the respiratory and/or the photosynthetic chain. The immediate electron acceptor for the enzyme in this species is believed to be plastoquinone. Couples the redox reaction to proton translocation, and thus conserves the redox energy in a proton gradient. Cyanobacterial NDH-1 also plays a role in inorganic carbon-concentration. In Rippkaea orientalis (strain PCC 8801 / RF-1) (Cyanothece sp. (strain PCC 8801)), this protein is NAD(P)H-quinone oxidoreductase subunit K.